A 208-amino-acid polypeptide reads, in one-letter code: Dephospho-CoA kinase (208 aa).

In terms of domain architecture, DPCK spans 8-208; it reads LVGVTGGIGS…VYQSLLTVVE (201 aa). Residue 16–21 coordinates ATP; sequence GSGKST.

The protein belongs to the CoaE family.

It is found in the cytoplasm. The catalysed reaction is 3'-dephospho-CoA + ATP = ADP + CoA + H(+). It participates in cofactor biosynthesis; coenzyme A biosynthesis; CoA from (R)-pantothenate: step 5/5. In terms of biological role, catalyzes the phosphorylation of the 3'-hydroxyl group of dephosphocoenzyme A to form coenzyme A. This is Dephospho-CoA kinase from Chlorobaculum tepidum (strain ATCC 49652 / DSM 12025 / NBRC 103806 / TLS) (Chlorobium tepidum).